We begin with the raw amino-acid sequence, 411 residues long: Multifunctional CCA protein (411 aa).

ATP-binding residues include Gly8 and Arg11. CTP contacts are provided by Gly8 and Arg11. Mg(2+) is bound by residues Asp21 and Asp23. Residues Arg91, Arg137, and Arg140 each contribute to the ATP site. Residues Arg91, Arg137, and Arg140 each coordinate CTP. In terms of domain architecture, HD spans 228-329 (CGIHTLMVAK…VNILDQIDSW (102 aa)).

The protein belongs to the tRNA nucleotidyltransferase/poly(A) polymerase family. Bacterial CCA-adding enzyme type 1 subfamily. Monomer. Can also form homodimers and oligomers. Mg(2+) serves as cofactor. Requires Ni(2+) as cofactor.

The enzyme catalyses a tRNA precursor + 2 CTP + ATP = a tRNA with a 3' CCA end + 3 diphosphate. It carries out the reaction a tRNA with a 3' CCA end + 2 CTP + ATP = a tRNA with a 3' CCACCA end + 3 diphosphate. Catalyzes the addition and repair of the essential 3'-terminal CCA sequence in tRNAs without using a nucleic acid template. Adds these three nucleotides in the order of C, C, and A to the tRNA nucleotide-73, using CTP and ATP as substrates and producing inorganic pyrophosphate. tRNA 3'-terminal CCA addition is required both for tRNA processing and repair. Also involved in tRNA surveillance by mediating tandem CCA addition to generate a CCACCA at the 3' terminus of unstable tRNAs. While stable tRNAs receive only 3'-terminal CCA, unstable tRNAs are marked with CCACCA and rapidly degraded. This chain is Multifunctional CCA protein, found in Photobacterium profundum (strain SS9).